The primary structure comprises 213 residues: Adenylate kinase (213 aa).

ATP is bound at residue 10 to 15 (GAGKGT). The tract at residues 30–59 (STGDMLRAAVAAGSEVGLRAKAAMESGSLV) is NMP. Residues Thr-31, Arg-36, 57–59 (SLV), 85–88 (GFPR), and Gln-92 contribute to the AMP site. The segment at 126–163 (GRSSCEKCGEGYHDSFKPSAQPNVCDKCSGTLKRRADD) is LID. An ATP-binding site is contributed by Arg-127. Zn(2+) contacts are provided by Cys-130, Cys-133, Cys-150, and Cys-153. The AMP site is built by Arg-160 and Arg-171. Gln-199 contributes to the ATP binding site.

It belongs to the adenylate kinase family. In terms of assembly, monomer.

It localises to the cytoplasm. It carries out the reaction AMP + ATP = 2 ADP. Its pathway is purine metabolism; AMP biosynthesis via salvage pathway; AMP from ADP: step 1/1. Catalyzes the reversible transfer of the terminal phosphate group between ATP and AMP. Plays an important role in cellular energy homeostasis and in adenine nucleotide metabolism. The polypeptide is Adenylate kinase (Magnetococcus marinus (strain ATCC BAA-1437 / JCM 17883 / MC-1)).